The primary structure comprises 594 residues: Sucrose transport protein SUC3 (594 aa).

Ser2 is modified (N-acetylserine). The Cytoplasmic segment spans residues 2–58 (SDSVSISVPYRNLRKEIELETVTKHRQNESGSSSFSESASPSNHSDSADGESVSKNC). A disordered region spans residues 23 to 50 (VTKHRQNESGSSSFSESASPSNHSDSAD). Positions 31 to 46 (SGSSSFSESASPSNHS) are enriched in low complexity. A helical membrane pass occupies residues 59 to 79 (SLVTLVLSCTVAAGVQFGWAL). Topologically, residues 80–98 (QLSLLTPYIQTLGISHAFS) are extracellular. The chain crosses the membrane as a helical span at residues 99-119 (SFIWLCGPITGLVVQPFVGIW). Residues 120 to 131 (SDKCTSKYGRRR) lie on the Cytoplasmic side of the membrane. A helical transmembrane segment spans residues 132-152 (PFILVGSFMISIAVIIIGFSA). Over 153-174 (DIGYLLGDSKEHCSTFKGTRTR) the chain is Extracellular. The chain crosses the membrane as a helical span at residues 175–195 (AAVVFIIGFWLLDLANNTVQG). Over 196–214 (PARALLADLSGPDQRNTAN) the chain is Cytoplasmic. The chain crosses the membrane as a helical span at residues 215–235 (AVFCLWMAIGNILGFSAGASG). Residues 236–257 (KWQEWFPFLTSRACCAACGNLK) are Extracellular-facing. Residues 258-278 (AAFLLAVVFLTICTLVTIYFA) traverse the membrane as a helical segment. Residues 279–365 (KEIPFTSNKP…LTSLRHLPPA (87 aa)) lie on the Cytoplasmic side of the membrane. Residues 366–386 (MHSVLIVMALTWLSWFPFFLF) form a helical membrane-spanning segment. Topologically, residues 387-417 (DTDWMGREVYHGDPTGDSLHMELYDQGVREG) are extracellular. A helical membrane pass occupies residues 418–438 (ALGLLLNSVVLGISSFLIEPM). Topologically, residues 439 to 445 (CQRMGAR) are cytoplasmic. The helical transmembrane segment at 446–466 (VVWALSNFTVFACMAGTAVIS) threads the bilayer. At 467 to 489 (LMSLSDDKNGIEYIMRGNETTRT) the chain is on the extracellular side. Asn484 carries an N-linked (GlcNAc...) asparagine glycan. The chain crosses the membrane as a helical span at residues 490–510 (AAVIVFALLGFPLAITYSVPF). At 511–525 (SVTAEVTADSGGGQG) the chain is on the cytoplasmic side. Residues 526–546 (LAIGVLNLAIVIPQMIVSLGA) traverse the membrane as a helical segment. The Extracellular segment spans residues 547 to 555 (GPWDQLFGG). A helical transmembrane segment spans residues 556 to 576 (GNLPAFVLASVAAFAAGVIAL). The Cytoplasmic portion of the chain corresponds to 577–594 (QRLPTLSSSFKSTGFHIG).

Belongs to the glycoside-pentoside-hexuronide (GPH) cation symporter transporter (TC 2.A.2.4) family. In terms of assembly, homodimer. Interacts with SUC2 and SUC4. Mostly localized in parenchymatic cells next to vascular tissues (at protein level). Present in stipules, trichomes, hydathodes and guard cells of source leaves, as well as in lateral root tips and flowers.

It is found in the cell membrane. The enzyme catalyses sucrose(out) + H(+)(out) = sucrose(in) + H(+)(in). It functions in the pathway glycan biosynthesis; sucrose metabolism. Inhibited by protonophores (e.g. dinitrophenol and carbonyl cyanide m-chlorophenyl-hydrazone (CCCP)) and SH group inhibitors (e.g. p-chloromercuribenzene sulphonic acid (PCMBS)). Responsible for the transport of sucrose into the cell, with the concomitant uptake of protons (symport system). Can also transport maltose at a lesser rate. May also transport biotin. Probably involved in carpel maturation that leads to pod shatter and seed dispersal. This chain is Sucrose transport protein SUC3, found in Arabidopsis thaliana (Mouse-ear cress).